A 270-amino-acid polypeptide reads, in one-letter code: Calpain small subunit 1 (270 aa).

Met1 is subject to N-acetylmethionine. Ser6 carries the post-translational modification Phosphoserine. Positions 98 to 132 (EEERQFRKLFVQLAGDDMEVSATELMNILNKVVTR) constitute an EF-hand 1; atypical domain. Residues Ala111, Asp114, Glu116, Glu121, Asp139, Asp154, Asp156, Thr158, Lys160, and Glu165 each contribute to the Ca(2+) site. 4 consecutive EF-hand domains span residues 141 to 174 (FGID…NNIK), 171 to 206 (NNIK…AGFH), 207 to 235 (LNQH…ISCL), and 236 to 270 (VRLD…TMYS). Residue Lys181 is modified to N6-acetyllysine. Ca(2+) contacts are provided by Asp184, Asp186, Ser188, Thr190, Glu195, and Asp227.

Homodimer or heterodimer of a large (catalytic) and a small (regulatory) subunit. In presence of calcium, the heterodimer dissociates.

It is found in the cytoplasm. It localises to the cell membrane. Functionally, regulatory subunit of the calcium-regulated non-lysosomal thiol-protease which catalyzes limited proteolysis of substrates involved in cytoskeletal remodeling and signal transduction. Essential for embryonic development. This Rattus norvegicus (Rat) protein is Calpain small subunit 1 (Capns1).